Reading from the N-terminus, the 469-residue chain is Serine carboxypeptidase-like 41 (469 aa).

The signal sequence occupies residues 1–20; that stretch reads MAIVSLRDVAMVMVTVQVFA. Cystine bridges form between Cys-83–Cys-342, Cys-243–Cys-260, and Cys-285–Cys-310. Residue Asn-134 is glycosylated (N-linked (GlcNAc...) asparagine). Ser-175 is a catalytic residue. N-linked (GlcNAc...) asparagine glycosylation occurs at Asn-255. Asn-331 and Asn-347 each carry an N-linked (GlcNAc...) asparagine glycan. Active-site residues include Asp-379 and His-436. N-linked (GlcNAc...) asparagine glycosylation is present at Asn-461.

It belongs to the peptidase S10 family. In terms of tissue distribution, expressed in flowers.

Its subcellular location is the secreted. Functionally, probable carboxypeptidase. The chain is Serine carboxypeptidase-like 41 (SCPL41) from Arabidopsis thaliana (Mouse-ear cress).